A 322-amino-acid polypeptide reads, in one-letter code: Basic 30 kDa endochitinase (322 aa).

Positions 1–22 are cleaved as a signal peptide; sequence MRLSEFTTLFLLFSVLLLSASA. The 42-residue stretch at 23–64 folds into the Chitin-binding type-1 domain; that stretch reads EQCGSQAGGALCASGLCCSKFGWCGNTNEYCGPGNCQSQCPG. Intrachain disulfides connect cysteine 25/cysteine 40, cysteine 34/cysteine 46, cysteine 39/cysteine 53, and cysteine 58/cysteine 62. Proline 66 and proline 68 each carry 4-hydroxyproline. 3 disulfide bridges follow: cysteine 93/cysteine 156, cysteine 168/cysteine 176, and cysteine 275/cysteine 307. Glutamate 138 serves as the catalytic Proton donor. Residues 316-322 constitute a propeptide, removed in mature form; that stretch reads GLLVDIM.

This sequence belongs to the glycosyl hydrolase 19 family. Chitinase class I subfamily. Post-translationally, the 4-hydroxyproline residues are not glycosylated in this plant vacuolar protein.

It localises to the vacuole. Its subcellular location is the secreted. It is found in the cell wall. The catalysed reaction is Random endo-hydrolysis of N-acetyl-beta-D-glucosaminide (1-&gt;4)-beta-linkages in chitin and chitodextrins.. Its function is as follows. Defense against chitin-containing fungal pathogens. The sequence is that of Basic 30 kDa endochitinase (CHI9) from Solanum lycopersicum (Tomato).